Reading from the N-terminus, the 445-residue chain is Methylphloroacetophenone oxidase (445 aa).

A helical membrane pass occupies residues 25–45 (VLSIALIGVACAISIRSILYV). A glycan (N-linked (GlcNAc...) asparagine) is linked at Asn-51.

The protein belongs to the cytochrome P450 family.

Its subcellular location is the membrane. It participates in secondary metabolite biosynthesis. Methylphloroacetophenone oxidase; part of the gene cluster that mediates the biosynthesis of usnic acid, a dibenzofuran lichen product possessing a broad spectrum of biological activities. Two genes, mpas and mpao, comprise the usnic acid biosynthetic gene cluster with a single post-PKS enzyme, the methylphloracetophenone oxidase (mpao). The methylphloroacetophenone synthase (mpas) is a non-reducing polyketide synthase that produces methylphloracetophenone from acetate via a methylated tetraketide intermediate. The methylphloroacetophenone oxidase then carries out the oxidative dimerization of methylphloracetophenone to usnic acid. The sequence is that of Methylphloroacetophenone oxidase from Cladonia uncialis (Cup lichen).